Consider the following 385-residue polypeptide: uncharacterized protein (385 aa).

Helical transmembrane passes span 17–37, 72–92, 107–127, 155–175, 191–211, 295–315, 326–346, and 354–374; these read ILIILFVGFLFLISLIGFIFT, TELMVFILFNIMVLIESWFLL, WILKLVYITVYVVFVVIKCIT, ICLIVSLVIHCIGLFVGFYII, WIQAVKILFIVLISYTILVLL, AFPSGHIGATLIVGCTFFYFL, ITLLALYFLHLVSMSFAIVVN, and ITFTYLWLLPLIFLTHFFNSF.

It localises to the membrane. This is an uncharacterized protein from Mycoplasma capricolum subsp. capricolum (strain California kid / ATCC 27343 / NCTC 10154).